The following is a 342-amino-acid chain: ATP synthase subunit a (342 aa).

8 helical membrane passes run 11-31 (GLIK…AFAS), 109-129 (HVVT…IIGS), 170-190 (YLPY…LGLV), 199-219 (NINV…IAAL), 238-258 (ALWI…PVAL), 262-282 (LFAN…ISFI), 287-307 (IVAV…EIFV), and 308-328 (AFLQ…LASA).

It belongs to the ATPase A chain family. In terms of assembly, F-type ATPases have 2 components, CF(1) - the catalytic core - and CF(0) - the membrane proton channel. CF(1) has five subunits: alpha(3), beta(3), gamma(1), delta(1), epsilon(1). CF(0) has four main subunits: a, b, b' and c.

It is found in the cell inner membrane. Its function is as follows. Key component of the proton channel; it plays a direct role in the translocation of protons across the membrane. This is ATP synthase subunit a from Chlorobium phaeobacteroides (strain DSM 266 / SMG 266 / 2430).